The chain runs to 497 residues: Vacuolar fusion protein CCZ1 homolog B (497 aa).

Residues Gly-244–Thr-284 form a disordered region.

It belongs to the CCZ1 family. As to quaternary structure, interacts with MON1.

Its subcellular location is the endosome. The protein localises to the prevacuolar compartment. In terms of biological role, plays an important role in membrane trafficking through the secretory apparatus. In complex with MON1, acts as a guanine exchange factor (GEF) for RABG3F of the RAB7 protein family. Promotes the exchange of GDP to GTP, converting RABG3F from an inactive GDP-bound form into an active GTP-bound form. The RABG3F active form is involved in protein trafficking from prevacuolar compartments (PVCs) to vacuoles. May serve as a linker between Rab5 and Rab7 protein families in PVCs and mediate PVC maturation. The chain is Vacuolar fusion protein CCZ1 homolog B from Arabidopsis thaliana (Mouse-ear cress).